Consider the following 158-residue polypeptide: SsrA-binding protein (158 aa).

Residues 135 to 158 (DKRKTLKDRDWERDKQRGFKKDLD) form a disordered region. Basic and acidic residues predominate over residues 141–158 (KDRDWERDKQRGFKKDLD).

The protein belongs to the SmpB family.

The protein localises to the cytoplasm. Functionally, required for rescue of stalled ribosomes mediated by trans-translation. Binds to transfer-messenger RNA (tmRNA), required for stable association of tmRNA with ribosomes. tmRNA and SmpB together mimic tRNA shape, replacing the anticodon stem-loop with SmpB. tmRNA is encoded by the ssrA gene; the 2 termini fold to resemble tRNA(Ala) and it encodes a 'tag peptide', a short internal open reading frame. During trans-translation Ala-aminoacylated tmRNA acts like a tRNA, entering the A-site of stalled ribosomes, displacing the stalled mRNA. The ribosome then switches to translate the ORF on the tmRNA; the nascent peptide is terminated with the 'tag peptide' encoded by the tmRNA and targeted for degradation. The ribosome is freed to recommence translation, which seems to be the essential function of trans-translation. The sequence is that of SsrA-binding protein from Psychrobacter cryohalolentis (strain ATCC BAA-1226 / DSM 17306 / VKM B-2378 / K5).